A 798-amino-acid polypeptide reads, in one-letter code: MDASGAATMAVLSSLLVFLALSSSLCSAGTLNARPAFPVQSGEIQPSGQNSKQAARRVMHPSFANAGRTPGLEIWRIENFEPVIYPKTNYGKFYTGDSFIVLNTIENKKDKKLSWDVHFWLGLETSTDEAGAAAILTVQLDDLLNGGPVQHREVQDHESQLFLSYFKNGIRYEQGGVGTGFKHVETNAQGETRLFQVKGKRNVRVRQVNLSVSSMNTGDCFILDAGSDIYVYVGSQAKRVEKLKAISAANQIRDQDHNGRARVQIVDDFSTDADKQHFFDVLGSGSADQVPDESTADEDSAFERTDAAAVSLYKVSDASGKLKVDIIGQKPLTQAMLDTRECFILDTGSGIFVWVGKGATQKEKTDAMAKAQEFLRTKKYPAWTQIHRIVEGSESAPFKQYFDTWRDAGMSHSRLIRSALGIGSDELLNDDEIDSVVTQLKKSGGRAFGFMPDHGQNVIETITQYVAKPGSDEIVVSTVPFDEKLPLLGFASYVLTYNYEANNGDTGSLTYVWHGVKASAAARKRAFEEGLVGSKDGLLVQTNQGHEPRHFYKIFKGKLLTSFTALPVTAQLFRIRGTVESDVHASEVAADSSSLASSDAFVLHSGKSHKIYIWNGLGASAFEKQAAVDRFSDYWDDVELEQVEEGAEPDEFWEELNGEGQYDRSLGDDGAPLLESRLFHCHLSSGGFLKVEEVAQYEQEDLDSDDIMLLDAGDEIYLWVGYGVSEEENGKLLDTAKLYFNLEPTARSFDTVSIIRVPQGKEPRVFKRMFPNWDDNYWQNQPSYEDMKQLVIDANNEV.

An N-terminal signal peptide occupies residues methionine 1–alanine 28. The interval arginine 57–phenylalanine 181 is actin-severing. The Gelsolin-like 1 repeat unit spans residues glutamate 78 to glycine 131. Tyrosine 90 is modified (phosphotyrosine; by SRC). Residues aspartate 128 to glycine 131 are actin-actin interfilament contact point. A 1,2-diacyl-sn-glycero-3-phospho-(1D-myo-inositol-4,5-bisphosphate) is bound by residues lysine 167–glutamine 174 and arginine 193–arginine 201. 4 Gelsolin-like repeats span residues valine 203 to leucine 243, leucine 322 to threonine 365, isoleucine 474 to lysine 524, and valine 583 to glutamine 625. Residues methionine 451–isoleucine 792 form an actin-binding, Ca-sensitive region. Aspartate 599 contacts Ca(2+). The residue at position 612 (tyrosine 612) is a Phosphotyrosine; by SRC. Glutamate 623 serves as a coordination point for Ca(2+). Tyrosine 662 carries the phosphotyrosine; by SRC modification. The stretch at leucine 689–glycine 730 is one Gelsolin-like 6 repeat. Ca(2+) contacts are provided by aspartate 705, aspartate 706, and glutamate 728.

It belongs to the villin/gelsolin family. In terms of assembly, binds to actin and to fibronectin. As to expression, isoform 1 and isoform 2 are ubiquitously expressed in early embryo. Isoform 1 is expressed in the fat body, and is abundant in hemolymph. Isoform 2 is expressed in parts of the gut.

The protein resides in the cytoplasm. Its subcellular location is the cytoskeleton. The protein localises to the secreted. Its function is as follows. Calcium-regulated, actin-modulating protein that binds to the plus (or barbed) ends of actin monomers or filaments, preventing monomer exchange (end-blocking or capping). It can promote the assembly of monomers into filaments (nucleation) as well as sever filaments already formed. This chain is Gelsolin (Gel), found in Drosophila melanogaster (Fruit fly).